A 433-amino-acid chain; its full sequence is MSVTATPVNLTELAHRTRQAARDLAGLSPTARNQALEAVARSLENASDEILAANQTDCRLATETGLAPALYSRLKLDSTKLAGAIAGVRSVSQLADPIGAVQLQRELDTGLILKRMTCPLGVLGVIFEARPDAVVQISALAIKSGNGVLLKGGQEALHSCKALVAAIHQGLASAGLNPDSIALLTSREETLALLELDQQVDLIIPRGSNAFVRFVQEHTRIPVLGHAEGICHLYVDQTADLEQAVQIAIDAKTQYPAACNAIETLLVHRAIAPQFLPQLATALQALKVELRGDELTREIIPVAPAAESDWATEYSDLILSIKVVADLESAINHINTYGSRHTEAIVTADENAATTFLHEVDAAGVFHNCSTRFADGFRYGLGAEVGISTHKLPPRGPVGLEGLVTYKYQLVGQGQVVSTYSGPSAKPFTHRDL.

Belongs to the gamma-glutamyl phosphate reductase family.

The protein localises to the cytoplasm. It catalyses the reaction L-glutamate 5-semialdehyde + phosphate + NADP(+) = L-glutamyl 5-phosphate + NADPH + H(+). It functions in the pathway amino-acid biosynthesis; L-proline biosynthesis; L-glutamate 5-semialdehyde from L-glutamate: step 2/2. Its function is as follows. Catalyzes the NADPH-dependent reduction of L-glutamate 5-phosphate into L-glutamate 5-semialdehyde and phosphate. The product spontaneously undergoes cyclization to form 1-pyrroline-5-carboxylate. The chain is Gamma-glutamyl phosphate reductase from Cyanothece sp. (strain PCC 7425 / ATCC 29141).